Here is a 144-residue protein sequence, read N- to C-terminus: Small ribosomal subunit protein bS6 (144 aa).

Residues 92–144 form a disordered region; that stretch reads KVDGHDEGPSVQMQKRDDRGDREERGDRGDRGDRGPRGDRGPREDRGPRPERR. Residues 93-144 show a composition bias toward basic and acidic residues; it reads VDGHDEGPSVQMQKRDDRGDREERGDRGDRGDRGPRGDRGPREDRGPRPERR.

The protein belongs to the bacterial ribosomal protein bS6 family.

Its function is as follows. Binds together with bS18 to 16S ribosomal RNA. This chain is Small ribosomal subunit protein bS6 (rpsF), found in Rhodobacter capsulatus (strain ATCC BAA-309 / NBRC 16581 / SB1003).